Here is a 567-residue protein sequence, read N- to C-terminus: Laccase-3 (567 aa).

An N-terminal signal peptide occupies residues Met-1 to Ala-24. 2 Plastocyanin-like domains span residues Ile-32 to Asn-148 and Arg-158 to Gly-310. Residue Asn-78 is glycosylated (N-linked (GlcNAc...) asparagine). Cu cation-binding residues include His-82, His-84, His-127, and His-129. 7 N-linked (GlcNAc...) asparagine glycosylation sites follow: Asn-148, Asn-187, Asn-203, Asn-298, Asn-330, Asn-379, and Asn-389. The Plastocyanin-like 3 domain occupies Asp-415–Tyr-551. Residues His-468, His-471, His-473, His-530, Cys-531, His-532, and His-536 each coordinate Cu cation.

It belongs to the multicopper oxidase family. Requires Cu cation as cofactor.

It localises to the secreted. It is found in the extracellular space. The protein localises to the apoplast. The catalysed reaction is 4 hydroquinone + O2 = 4 benzosemiquinone + 2 H2O. In terms of biological role, lignin degradation and detoxification of lignin-derived products. This Oryza sativa subsp. japonica (Rice) protein is Laccase-3 (LAC3).